The sequence spans 2335 residues: MEYFSDLKNKNESIQLAAADQLKEFVHSSTKELSGESLARFNNDINRRIFELIHSHDSHERFGGILAIGKLIEFESEGDVTNLSRYANYLRMTLPSTDWHSMELSAKVLGHLAASGGTLAAEFVEFEVQRAFEWLQGDRQEQKRMAAILIIKALAQNSPTLVYLYISEIFQNLWTGLRDPKPLIRETAADALGASLDVVCQREAKVQLQCFNEVLLQAEHGLRQSSVEYLHGSLLAYKELFEKSGSFIREHYTEFCDLALRLREHRDNSIRRCIVFLLPTLSEYNPKKFQQRYLDSFMVYLLSHIRKDKEKSLAFEAIGRIAMAVNEAMIPYLQNILKVIRDTLTAKVREKTQYEKPVFECIGMLAAAVKLELLEDSRSLLGLIFSCELSVHLRQALVKMAENIPPLLAPIQERLLNMVSQILTGKNFEIRTNDTYTPSFTNIYSAREPDQRSKSTESIILALETLGTFNFTGYSLISFIQESVLSYLENDNSEIRIAAARTCCQVFARDPICRKTNPLAVESVAEVLEKLLTLGIADSDPKIRETVLSLLDERFDRHLAHPDNIRCLFIALNDEVFSIREIAIIIIGRLALYNPAHVMPSLRKTIIQLLSDMEYSGNSRQKEESAQLLKLLVSKARTLIKPYIQSIIHVILPKAADTSPGVSSAIISALGELASVEGEDMPVDVRGSFMKLILVNLQDQSSTLKRLASLKCLRKLCGRSGYVIQPYLDYPPLLGALIGILQSEQPTPIRREVLRTLGVLGALDPYTYLTTEEVSDDLQSSHNNAHGVPQISAAQYPSLENYAMVAVVTLIGILKDSSLSMHHSSVVQAVMHICSQMGSKSTVFLPQVVPTFLQVMQSLSASSAEFYFQQLTTLTSIIGPNIRDYVSDIFNLSKVFWESTTSLLLVILELIDAIAIALQDEFKFYLPQILSCMLKAFSLDNTSSRSVSYKVLQSFVIFGSNIEEYMHLVLPVIIRSFERDTIPLGFRKSALKCIAQLFQSVNFSDHASRIIHPLVRMLGKSNGDLRAVIMDTLCAIVSQLGYDYSIFIPMVNKVLVSHKISHPAYELLVSRLLKGEPLPKDVVVKEFKPRPSTKPFSTQDEVLTKLPVDQASLKAAWESSQKLTRDDWQDWIRRISIELLKESPSSALRSCSTLAGIYHPLARDLFNVSFLSCWDELTESNKKNLVKSIELAMNAPNISVEILQTLLNLAEYMEREDHTLPIPIKVISAHASKCNVYAKALHYTELQFVQETKEEVSISTIESLITINNHLQQSDAAVGMLQYTKEHKQFSLKETWYEKLHRWDDALAAYEHREREGDSSFEINIGKLRCYYALGDWDHLSELAQKAWVTSEQEHREAIAPLAAAAAWGLGQWNLISEYVSAMDRDPQDKEFFSAISAVHLGQYNKAYGHIERHRDILVNDLSSIIGESYNRAYGIMVKSQMLSELEEIIDYKKNMQYENNLDSLKKTWRKRLEGCQKNVDVWHNTLRFRALVLSPQDSPEMWIKLADLCRRSDRLKLSNQCLTYLMGRDPSNAYPLDSLKLLNPHVVYTYLKYLWATDQKNIAVSELEEFTSYLSSKHGYKMGDSSKLVDILASSSVSSEERSFLARCFHKLGKWKKSLQDSVNQESVRDILNCYFYATLFDKSWYKAWHSWALANFEVVGYYEQTEHGVTQDMYEQYIVPAIKGFFHSSVLNQKNSLQDILRLLNLWFKFGEHSDVAAAIVEGFSNVPMDTWLEVIPQLIARIHTSSSSVRASVHQLLSDIGRVHPQALVYSLTVSSKSTNPQQKHSAKSIMDSMLSHSDTLVRQALLVSQELIRVAILWHELWYEGLEEASQAYFSDHDISLMIDIVKPLHETLEKGPSTLSEISFAQTFGYDLRKARSYWQKFLQDGDPTELNQSWDLYYQVFRRIQKQLPRIKHLELQYVSPKLLDACDLELAVPGTYGHNKPVIRISHFHHTFEVISSKQRPRRLTIHGSDGKDYQYVLKGHEDLRQDERVMQLFGLCNTLLTTDSETFKRRLNIERYTVIPLSPNSGLLGWVPHSDTLHFLIKEFRSKRNILLNLEHRMMLQMAPDCDSLTLLQKLEVFEYVMANTDGYDLYHVLWLKSRSSEAWLDRRTSYTQSLAVMSMVGYILGLGDRHPSNLMMDRYSGKIIHIDFGDCFEVAMHREKFPEKIPFRLTRMLINAMEVSGIQGTYKITCELVMRVLRSNTESLMAVLEAFVYDPLINWRLMTKSSFGASTTLRPTSSSVEEKGRSYTHRARHADYAALSETNGVNAEGLNERSIQVLKRVSNKLTGKDFDLKEQLPVKAQVEKLIQQATAPENLCRCYVGWCSFW.

HEAT repeat units lie at residues 1-31, 164-201, 331-371, 410-449, 474-512, 522-560, 562-596, 642-679, 684-722, 728-766, 843-880, 904-923, 924-961, 964-1003, and 1005-1042; these read MEYFSDLKNKNESIQLAAADQLKEFVHSSTK, LYISEIFQNLWTGLRDPKPLIRETAADALGASLDVVCQ, PYLQ…AVKL, PIQERLLNMVSQILTGKNFEIRTNDTYTPSFTNIYSAREP, YSLISFIQESVLSYLENDNSEIRIAAARTCCQVFARDPI, ESVAEVLEKLLTLGIADSDPKIRETVLSLLDERFDRHLA, PDNIRCLFIALNDEVFSIREIAIIIIGRLALYNPA, PYIQSIIHVILPKAADTSPGVSSAIISALGELASVEGE, DVRGSFMKLILVNLQDQSSTLKRLASLKCLRKLCGRSGY, LDYPPLLGALIGILQSEQPTPIRREVLRTLGVLGALDPY, VFLPQVVPTFLQVMQSLSASSAEFYFQQLTTLTSIIGP, LLVILELIDAIAIALQDEFK, FYLPQILSCMLKAFSLDNTSSRSVSYKVLQSFVIFGSN, EYMHLVLPVIIRSFERDTIPLGFRKSALKCIAQLFQSVNF, and DHASRIIHPLVRMLGKSNGDLRAVIMDTLCAIVSQLGY. An FAT domain is found at 1226-1781; the sequence is VISAHASKCN…VYSLTVSSKS (556 aa). A PI3K/PI4K catalytic domain is found at 1955 to 2269; the sequence is FHHTFEVISS…ARHADYAALS (315 aa). Residues 1961–1967 form a G-loop region; it reads VISSKQR. Thr-1972 is subject to Phosphothreonine; by PKB/AKT1. Residues 2134–2142 form a catalytic loop region; the sequence is GLGDRHPSN. Residues 2154–2179 form an activation loop region; it reads HIDFGDCFEVAMHREKFPEKIPFRLT. Positions 2303-2335 constitute an FATC domain; sequence EQLPVKAQVEKLIQQATAPENLCRCYVGWCSFW.

The protein belongs to the PI3/PI4-kinase family. As to quaternary structure, the target of rapamycin complex 2 (TORC2) is composed of at least bit61, pop3/wat1, sin1, ste20 and tor1. Phosphorylation at Thr-1972 in the ATP-binding region by AKT1 strongly reduces kinase activity.

Its subcellular location is the cytoplasm. It catalyses the reaction L-seryl-[protein] + ATP = O-phospho-L-seryl-[protein] + ADP + H(+). It carries out the reaction L-threonyl-[protein] + ATP = O-phospho-L-threonyl-[protein] + ADP + H(+). In terms of biological role, catalytic component of TORC2, which regulates multiple cellular processes to control cell growth in response to environmental signals. In response to signals, TORC2 phosphorylates AGC protein kinase family members. TORC2 is required for cell survival under various stress conditions. TORC2 positively controls G1 cell-cycle arrest, sexual development and amino acid uptake. Positively regulates amino acid uptake through the control of expression of amino acid permeases. Responsible for the phosphorylation of AGC kinase gad8 at 'Ser-527' and 'Ser-546', activating gad8 kinase activity and promoting sexual development. The protein is Serine/threonine-protein kinase tor1 of Schizosaccharomyces pombe (strain 972 / ATCC 24843) (Fission yeast).